Here is a 150-residue protein sequence, read N- to C-terminus: Cell division protein SepF (150 aa).

The protein belongs to the SepF family. In terms of assembly, homodimer. Interacts with FtsZ.

Its subcellular location is the cytoplasm. In terms of biological role, cell division protein that is part of the divisome complex and is recruited early to the Z-ring. Probably stimulates Z-ring formation, perhaps through the cross-linking of FtsZ protofilaments. Its function overlaps with FtsA. This Clostridium botulinum (strain Kyoto / Type A2) protein is Cell division protein SepF.